Here is a 142-residue protein sequence, read N- to C-terminus: MKTFVAKPETVKRDWYVVDATGKTLGRLATELARRLRGKHKAEYTPHVDTGDYIIVINAEKVAVTGKKETDKIYYWHTGYVGGIKDATFKEMIARRPEAVIEIAVKGMLPKGPLGREMFRKLKVYAGNEHNHAAQQPQVLDI.

Belongs to the universal ribosomal protein uL13 family. Part of the 50S ribosomal subunit.

Functionally, this protein is one of the early assembly proteins of the 50S ribosomal subunit, although it is not seen to bind rRNA by itself. It is important during the early stages of 50S assembly. This is Large ribosomal subunit protein uL13 from Actinobacillus pleuropneumoniae serotype 5b (strain L20).